The primary structure comprises 428 residues: 3-phosphoshikimate 1-carboxyvinyltransferase (428 aa).

The 3-phosphoshikimate site is built by K20, S21, and R25. Residue K20 coordinates phosphoenolpyruvate. G92 and R120 together coordinate phosphoenolpyruvate. 3-phosphoshikimate contacts are provided by S166, Q168, D314, and K341. Q168 provides a ligand contact to phosphoenolpyruvate. The Proton acceptor role is filled by D314. Residues R345 and R387 each contribute to the phosphoenolpyruvate site.

The protein belongs to the EPSP synthase family. As to quaternary structure, monomer.

The protein resides in the cytoplasm. The catalysed reaction is 3-phosphoshikimate + phosphoenolpyruvate = 5-O-(1-carboxyvinyl)-3-phosphoshikimate + phosphate. It participates in metabolic intermediate biosynthesis; chorismate biosynthesis; chorismate from D-erythrose 4-phosphate and phosphoenolpyruvate: step 6/7. Catalyzes the transfer of the enolpyruvyl moiety of phosphoenolpyruvate (PEP) to the 5-hydroxyl of shikimate-3-phosphate (S3P) to produce enolpyruvyl shikimate-3-phosphate and inorganic phosphate. The protein is 3-phosphoshikimate 1-carboxyvinyltransferase of Listeria monocytogenes serovar 1/2a (strain ATCC BAA-679 / EGD-e).